Here is a 28-residue protein sequence, read N- to C-terminus: Short cationic peptide-1b (28 aa).

Glutamic acid 1-amide is present on Glu-28.

Expressed by the venom gland.

It localises to the secreted. The chain is Short cationic peptide-1b from Cupiennius salei (American wandering spider).